Consider the following 363-residue polypeptide: Phospho-N-acetylmuramoyl-pentapeptide-transferase (363 aa).

The next 10 helical transmembrane spans lie at 33-53, 82-102, 105-125, 133-153, 166-186, 198-218, 227-247, 271-291, 295-315, and 340-360; these read YAVL…GVLP, GVIF…PSFV, LILL…CAQV, GALD…FYFH, PVFV…WMSI, LSGA…YFLL, LLVP…ALAG, ALGF…LLLM, VILV…FFHV, and VLLR…GVLF.

This sequence belongs to the glycosyltransferase 4 family. MraY subfamily. Requires Mg(2+) as cofactor.

It is found in the cell inner membrane. It carries out the reaction UDP-N-acetyl-alpha-D-muramoyl-L-alanyl-gamma-D-glutamyl-meso-2,6-diaminopimeloyl-D-alanyl-D-alanine + di-trans,octa-cis-undecaprenyl phosphate = di-trans,octa-cis-undecaprenyl diphospho-N-acetyl-alpha-D-muramoyl-L-alanyl-D-glutamyl-meso-2,6-diaminopimeloyl-D-alanyl-D-alanine + UMP. It participates in cell wall biogenesis; peptidoglycan biosynthesis. In terms of biological role, catalyzes the initial step of the lipid cycle reactions in the biosynthesis of the cell wall peptidoglycan: transfers peptidoglycan precursor phospho-MurNAc-pentapeptide from UDP-MurNAc-pentapeptide onto the lipid carrier undecaprenyl phosphate, yielding undecaprenyl-pyrophosphoryl-MurNAc-pentapeptide, known as lipid I. This Treponema pallidum (strain Nichols) protein is Phospho-N-acetylmuramoyl-pentapeptide-transferase.